Consider the following 309-residue polypeptide: Probable 4-hydroxy-2-oxoglutarate aldolase, mitochondrial (309 aa).

Serine 49 to asparagine 50 is a binding site for substrate. Lysine 173 acts as the Schiff-base intermediate with substrate in catalysis.

The protein belongs to the DapA family.

It carries out the reaction (4S)-4-hydroxy-2-oxoglutarate = glyoxylate + pyruvate. It catalyses the reaction (4R)-4-hydroxy-2-oxoglutarate = glyoxylate + pyruvate. Its activity is regulated as follows. Inhibited by divalent cations. Functionally, catalyzes the final step in the metabolic pathway of hydroxyproline. Involved in osmoadaptation. This chain is Probable 4-hydroxy-2-oxoglutarate aldolase, mitochondrial, found in Emericella nidulans (strain FGSC A4 / ATCC 38163 / CBS 112.46 / NRRL 194 / M139) (Aspergillus nidulans).